A 259-amino-acid polypeptide reads, in one-letter code: Protein LEAD-SENSITIVE 1 (259 aa).

Positions 20–168 constitute an LRAT domain; it reads YSWRTAYIYA…CKTALLVLEG (149 aa). Catalysis depends on residues His-30 and His-42. Cys-152 acts as the Acyl-thioester intermediate in catalysis.

As to expression, highly expressed in inflorescences, siliques and stems, and, to a lower extent, in roots and leaves.

The protein localises to the cytoplasm. Confers tolerance to lead ions (Pb) stress mediated by Pb(NO(3))(2) probably by promoting Pb accumulation leading to subsequent glutathione-dependent phytochelatin (PC) synthesis and related gene expression, including PDR12/ABCG40, GSH1, GSH2, GR1, GR2, PCS1 and PCS2. The protein is Protein LEAD-SENSITIVE 1 of Arabidopsis thaliana (Mouse-ear cress).